Consider the following 240-residue polypeptide: Large ribosomal subunit protein bL25 (240 aa).

2 disordered regions span residues Met-1–Arg-21 and Gly-204–Lys-240. The span at Gly-204–Gly-229 shows a compositional bias: low complexity. Positions Gly-230–Lys-240 are enriched in basic and acidic residues.

This sequence belongs to the bacterial ribosomal protein bL25 family. CTC subfamily. Part of the 50S ribosomal subunit; part of the 5S rRNA/L5/L18/L25 subcomplex. Contacts the 5S rRNA. Binds to the 5S rRNA independently of L5 and L18.

This is one of the proteins that binds to the 5S RNA in the ribosome where it forms part of the central protuberance. The protein is Large ribosomal subunit protein bL25 of Anaeromyxobacter dehalogenans (strain 2CP-1 / ATCC BAA-258).